Consider the following 82-residue polypeptide: Omega-conotoxin-like Am6.2 (82 aa).

Residues 1-22 (MKLTCMMIVAVLFLTAWTFVTA) form the signal peptide. Residues 23–52 (VPHSSNVLENLYLKARHEMENQEASKLNMR) constitute a propeptide that is removed on maturation. Disulfide bonds link Cys-56–Cys-73, Cys-63–Cys-77, and Cys-72–Cys-81. The residue at position 76 (Trp-76) is a 6'-bromotryptophan; partial; in Am6.2b (major form).

Belongs to the conotoxin O1 family. Mostly non-hydroxylated. In terms of processing, two forms of this peptides have been described. Am6.2a (Am3136) is not unmodified, while Am6.2b (Am3214) is Trp-76 brominated. Both forms are found in venom with a much more abundant brominated form. As to expression, expressed by the venom duct.

The protein localises to the secreted. In terms of biological role, omega-conotoxins act at presynaptic membranes, they bind and block voltage-gated calcium channels (Cav). This is Omega-conotoxin-like Am6.2 from Conus amadis (Amadis cone).